A 239-amino-acid chain; its full sequence is Ribonuclease PH (239 aa).

Phosphate-binding positions include arginine 87 and 125-127 (GTR).

Belongs to the RNase PH family. In terms of assembly, homohexameric ring arranged as a trimer of dimers.

The enzyme catalyses tRNA(n+1) + phosphate = tRNA(n) + a ribonucleoside 5'-diphosphate. In terms of biological role, phosphorolytic 3'-5' exoribonuclease that plays an important role in tRNA 3'-end maturation. Removes nucleotide residues following the 3'-CCA terminus of tRNAs; can also add nucleotides to the ends of RNA molecules by using nucleoside diphosphates as substrates, but this may not be physiologically important. Probably plays a role in initiation of 16S rRNA degradation (leading to ribosome degradation) during starvation. The chain is Ribonuclease PH from Ectopseudomonas mendocina (strain ymp) (Pseudomonas mendocina).